A 331-amino-acid polypeptide reads, in one-letter code: N-arachidonyl glycine receptor (331 aa).

At 1 to 26 (MAIPSNRDQLALSNGSHPEEYKIAAL) the chain is on the extracellular side. Asparagine 14 carries an N-linked (GlcNAc...) asparagine glycan. A helical transmembrane segment spans residues 27-47 (VFYSCIFLIGLLVNVTALWVF). The Cytoplasmic segment spans residues 48–56 (SCTTKKRTT). A helical membrane pass occupies residues 57 to 77 (VTIYMMNVALLDLVFILSLPF). Topologically, residues 78-95 (RMFYYAKGEWPFGDYFCH) are extracellular. Residues cysteine 94 and cysteine 172 are joined by a disulfide bond. A helical transmembrane segment spans residues 96–116 (ILGALVVFYPSLALWLLALIS). Topologically, residues 117-138 (ADRYMAIVQPKYAKELKNTGKA) are cytoplasmic. A helical transmembrane segment spans residues 139 to 159 (VLACVGVWIMTLTTTVPLLLL). Residues 160 to 191 (DEDPDKASSPATCLKISDIIHLKAVNVLNFTR) lie on the Extracellular side of the membrane. An N-linked (GlcNAc...) asparagine glycan is attached at asparagine 188. Residues 192 to 212 (LIFFFLIPLFIMIGCYVVIIH) traverse the membrane as a helical segment. The Cytoplasmic portion of the chain corresponds to 213–236 (SLLRGQTSKLKPKVKEKSIRIIVT). A helical membrane pass occupies residues 237 to 257 (LLLQVLACFVPFHICFALLML). Residues 258–268 (QGEENSYSPWG) lie on the Extracellular side of the membrane. The chain crosses the membrane as a helical span at residues 269 to 289 (AFTTFLMNLSTCLDVVLYYIV). At 290 to 331 (SKQFQARVISVMLYRNYLRSVRRKSVRSGSLRSLSNMNSEML) the chain is on the cytoplasmic side. The residue at position 322 (serine 322) is a Phosphoserine.

Belongs to the G-protein coupled receptor 1 family. Expressed in testis, spleen and brain (at protein level).

The protein resides in the cell membrane. Its subcellular location is the cytoplasmic vesicle membrane. G protein-coupled receptor (GPCR) that plays a role in diverse physiological processes particularly within the immune and nervous systems. Becomes active when triggered by various endogenous ligands including endocannabinoid N-arachidonyl glycine (NAGly), delta-9-tetrahydrocannabinol or resolvin D2/RvD2 derived from the omega-3 fatty acid docosahexaenoic acid (DHA). Upon RvD2 binding, facilitates the resolution of inflammation, aiding in tissue repair and homeostasis. Mechanistically, RvD2 ligation initiates Galphas protein coupling, activation of cAMP-PKA signaling pathway and phosphorylation of STAT3, leading to RvD2-stimulated macrophage phagocytosis. Mediates NAGly-induced process of reorganization of actin filaments and induction of acrosomal exocytosis. Activation by N-arachidonoyl glycine (NAGly) can also induce apoptosis in macrophages. Plays a role in homeostasis of CD8+ subsets of intraepithelial lymphocytes (IELs) (CD8alphaalpha and CD8alphabeta IELs) in small intestine by supporting preferential migration of CD8alphaalpha T-cells to intraepithelial compartment over lamina propria compartment, and by mediating their reconstitution into small intestine after bone marrow transplant. Participates also in hypotensive responses, mediating reduction in intraocular and blood pressure. In Rattus norvegicus (Rat), this protein is N-arachidonyl glycine receptor.